The sequence spans 542 residues: CTP synthase (542 aa).

Positions 1-265 (MARYVFITGG…DSEVLCAFGI (265 aa)) are amidoligase domain. Ser13 is a binding site for CTP. Ser13 lines the UTP pocket. 14-19 (SLGKGI) contacts ATP. Residue Tyr54 coordinates L-glutamine. Asp71 contacts ATP. Mg(2+)-binding residues include Asp71 and Glu139. Residues 146-148 (DIE), 186-191 (KTKPTQ), and Lys222 each bind CTP. Residues 186-191 (KTKPTQ) and Lys222 each bind UTP. Positions 291 to 541 (TIAVVGKYTG…IEAAVEQSRL (251 aa)) constitute a Glutamine amidotransferase type-1 domain. Ala353 lines the L-glutamine pocket. The active-site Nucleophile; for glutamine hydrolysis is Cys380. L-glutamine contacts are provided by residues 381–384 (FGMQ), Glu404, and Arg469. Catalysis depends on residues His514 and Glu516.

It belongs to the CTP synthase family. As to quaternary structure, homotetramer.

The catalysed reaction is UTP + L-glutamine + ATP + H2O = CTP + L-glutamate + ADP + phosphate + 2 H(+). It catalyses the reaction L-glutamine + H2O = L-glutamate + NH4(+). The enzyme catalyses UTP + NH4(+) + ATP = CTP + ADP + phosphate + 2 H(+). It functions in the pathway pyrimidine metabolism; CTP biosynthesis via de novo pathway; CTP from UDP: step 2/2. Its activity is regulated as follows. Allosterically activated by GTP, when glutamine is the substrate; GTP has no effect on the reaction when ammonia is the substrate. The allosteric effector GTP functions by stabilizing the protein conformation that binds the tetrahedral intermediate(s) formed during glutamine hydrolysis. Inhibited by the product CTP, via allosteric rather than competitive inhibition. Functionally, catalyzes the ATP-dependent amination of UTP to CTP with either L-glutamine or ammonia as the source of nitrogen. Regulates intracellular CTP levels through interactions with the four ribonucleotide triphosphates. The chain is CTP synthase from Bartonella tribocorum (strain CIP 105476 / IBS 506).